The chain runs to 105 residues: Biogenesis of lysosome-related organelles complex 1 subunit SNN1 (105 aa).

Residues 70–105 (WKDDNERLDSLRKRVDSLKSRFQSLKLRSDKLEQRE) are a coiled coil.

It belongs to the SNAPIN family. Component of the biogenesis of lysosome-related organelles complex-1 (BLOC-1).

Its subcellular location is the endosome. Its function is as follows. Component of the biogenesis of lysosome-related organelles complex-1 (BLOC-1), a complex involved in endosomal cargo sorting. This is Biogenesis of lysosome-related organelles complex 1 subunit SNN1 (SNN1) from Zygosaccharomyces rouxii (strain ATCC 2623 / CBS 732 / NBRC 1130 / NCYC 568 / NRRL Y-229).